The following is a 1091-amino-acid chain: ATP-dependent RNA helicase ddx54 (1091 aa).

2 disordered regions span residues Met-1–Phe-63 and Asp-150–Gly-231. Residues Met-26 to Ser-35 show a composition bias toward basic and acidic residues. The span at Asp-150–Phe-161 shows a compositional bias: polar residues. Basic and acidic residues predominate over residues Lys-196–Glu-207. Positions Gly-230–Arg-258 match the Q motif motif. Residues Ile-261–Ile-433 enclose the Helicase ATP-binding domain. Position 274–281 (Ala-274–Thr-281) interacts with ATP. The DEAD box motif lies at Asp-381–Asp-384. Residues Thr-478–Asn-632 form the Helicase C-terminal domain. 2 disordered regions span residues Glu-801–Asn-896 and Lys-933–Lys-1091. Over residues Asp-814 to Glu-823 the composition is skewed to basic and acidic residues. The span at Asn-824–Glu-855 shows a compositional bias: acidic residues. Composition is skewed to basic and acidic residues over residues Glu-865 to Lys-874, Asp-944 to Lys-975, and Gln-1008 to Ala-1019. The segment covering Ser-1020–Lys-1029 has biased composition (basic residues). The span at Arg-1031–Met-1052 shows a compositional bias: basic and acidic residues. The segment covering Ser-1068 to Phe-1079 has biased composition (gly residues).

The protein belongs to the DEAD box helicase family. DDX54/DBP10 subfamily.

It localises to the nucleus. The protein resides in the nucleolus. It carries out the reaction ATP + H2O = ADP + phosphate + H(+). In terms of biological role, ATP-binding RNA helicase which may be involved in the ribosome biogenesis. This is ATP-dependent RNA helicase ddx54 (helA) from Dictyostelium discoideum (Social amoeba).